The primary structure comprises 4466 residues: Dynein beta chain, ciliary (4466 aa).

Positions 1 to 1813 (MADVVDPRLE…YANICDAQFK (1813 aa)) are stem. ATP is bound at residue 154–161 (AGQVKGKT). Coiled-coil stretches lie at residues 733-805 (TVLE…WTKQ), 1036-1056 (TLDQ…EADE), 1306-1337 (WLEI…AWDA), and 1443-1468 (LLKS…MTSK). 4 AAA regions span residues 1814–2035 (YSYE…VLVV), 2095–2316 (KVVK…VRFK), 2422–2669 (ELDP…VFQG), and 2767–3016 (TYNE…ERRY). Residues 1852–1859 (GPAGTGKT), 2133–2140 (GNAGTGKS), 2460–2467 (GNAGLGKS), and 2805–2812 (GVGGSGKQ) contribute to the ATP site. 3 coiled-coil regions span residues 3033–3092 (SLLS…QVVG), 3263–3325 (EPKR…SRTI), and 3573–3642 (QERP…EEAK). Residues 3033 to 3325 (SLLSMKSKEL…QEAEATSRTI (293 aa)) are stalk. AAA regions lie at residues 3409 to 3636 (LTDD…EISV) and 3846 to 4072 (VRNF…VLYN).

This sequence belongs to the dynein heavy chain family. As to quaternary structure, consists of at least two heavy chains (alpha and beta), three intermediate chains and several light chains.

The protein localises to the cell projection. The protein resides in the cilium. It is found in the flagellum. It localises to the cytoplasm. Its subcellular location is the cytoskeleton. The protein localises to the flagellum axoneme. In terms of biological role, force generating protein of eukaryotic cilia and flagella. Produces force towards the minus ends of microtubules. Dynein has ATPase activity; the force-producing power stroke is thought to occur on release of ADP. This is Dynein beta chain, ciliary from Tripneustes gratilla (Hawaian sea urchin).